The following is a 605-amino-acid chain: UvrABC system protein C (605 aa).

The 79-residue stretch at 14–92 (QSCGVYKMVG…IKSLKPLYNI (79 aa)) folds into the GIY-YIG domain. Residues 202 to 237 (KEVKEQLLFTMRKCSSEENYELAAIYRDRVKFLEQI) form the UVR domain.

It belongs to the UvrC family. As to quaternary structure, interacts with UvrB in an incision complex.

Its subcellular location is the cytoplasm. In terms of biological role, the UvrABC repair system catalyzes the recognition and processing of DNA lesions. UvrC both incises the 5' and 3' sides of the lesion. The N-terminal half is responsible for the 3' incision and the C-terminal half is responsible for the 5' incision. This chain is UvrABC system protein C, found in Wolbachia pipientis wMel.